Consider the following 384-residue polypeptide: Glutamate 5-kinase (384 aa).

Lys24 is a binding site for ATP. Residues Ser64, Asp149, and Asn161 each coordinate substrate. Residues 181–182 (TD) and 223–229 (TGGMRTK) contribute to the ATP site. Positions 288-370 (PGAILIDAGA…RDIQTLLGYT (83 aa)) constitute a PUA domain.

The protein belongs to the glutamate 5-kinase family.

It is found in the cytoplasm. It catalyses the reaction L-glutamate + ATP = L-glutamyl 5-phosphate + ADP. Its pathway is amino-acid biosynthesis; L-proline biosynthesis; L-glutamate 5-semialdehyde from L-glutamate: step 1/2. Catalyzes the transfer of a phosphate group to glutamate to form L-glutamate 5-phosphate. The polypeptide is Glutamate 5-kinase (Xylella fastidiosa (strain M23)).